Here is a 512-residue protein sequence, read N- to C-terminus: D-alanine--D-alanyl carrier protein ligase (512 aa).

152–153 (TS) is a binding site for ATP. A D-alanine-binding site is contributed by Asp-199. 294 to 299 (NAYGPT) provides a ligand contact to ATP. Residue Val-303 coordinates D-alanine. ATP-binding positions include Asp-385, 397-400 (YGGR), and Lys-499. D-alanine is bound at residue Lys-499.

The protein belongs to the ATP-dependent AMP-binding enzyme family. DltA subfamily.

The protein resides in the cytoplasm. The catalysed reaction is holo-[D-alanyl-carrier protein] + D-alanine + ATP = D-alanyl-[D-alanyl-carrier protein] + AMP + diphosphate. The protein operates within cell wall biogenesis; lipoteichoic acid biosynthesis. Its function is as follows. Catalyzes the first step in the D-alanylation of lipoteichoic acid (LTA), the activation of D-alanine and its transfer onto the D-alanyl carrier protein (Dcp) DltC. In an ATP-dependent two-step reaction, forms a high energy D-alanyl-AMP intermediate, followed by transfer of the D-alanyl residue as a thiol ester to the phosphopantheinyl prosthetic group of the Dcp. D-alanylation of LTA plays an important role in modulating the properties of the cell wall in Gram-positive bacteria, influencing the net charge of the cell wall. The chain is D-alanine--D-alanyl carrier protein ligase from Streptococcus pyogenes serotype M4 (strain MGAS10750).